Consider the following 349-residue polypeptide: N-acetyl-gamma-glutamyl-phosphate reductase (349 aa).

Cys-149 is an active-site residue.

It belongs to the NAGSA dehydrogenase family. Type 1 subfamily.

The protein localises to the cytoplasm. It carries out the reaction N-acetyl-L-glutamate 5-semialdehyde + phosphate + NADP(+) = N-acetyl-L-glutamyl 5-phosphate + NADPH + H(+). It functions in the pathway amino-acid biosynthesis; L-arginine biosynthesis; N(2)-acetyl-L-ornithine from L-glutamate: step 3/4. Its function is as follows. Catalyzes the NADPH-dependent reduction of N-acetyl-5-glutamyl phosphate to yield N-acetyl-L-glutamate 5-semialdehyde. In Acinetobacter baylyi (strain ATCC 33305 / BD413 / ADP1), this protein is N-acetyl-gamma-glutamyl-phosphate reductase.